The following is a 658-amino-acid chain: UvrABC system protein C (658 aa).

In terms of domain architecture, GIY-YIG spans 62 to 140 (PKPGVYRMLD…IKRFRPPYNV (79 aa)). The UVR domain maps to 250–285 (GAVQREIEAQMHKAAEDLDFERAAMLRDRLRAATFI).

Belongs to the UvrC family. In terms of assembly, interacts with UvrB in an incision complex.

It is found in the cytoplasm. In terms of biological role, the UvrABC repair system catalyzes the recognition and processing of DNA lesions. UvrC both incises the 5' and 3' sides of the lesion. The N-terminal half is responsible for the 3' incision and the C-terminal half is responsible for the 5' incision. The protein is UvrABC system protein C of Novosphingobium aromaticivorans (strain ATCC 700278 / DSM 12444 / CCUG 56034 / CIP 105152 / NBRC 16084 / F199).